The following is a 146-amino-acid chain: uncharacterized protein (146 aa).

Positions 34-135 (EDKIVNDVMT…PLLEKAHALF (102 aa)) constitute a Glutaredoxin domain. Cysteine 54 provides a ligand contact to [2Fe-2S] cluster.

The protein belongs to the glutaredoxin family. Monothiol subfamily.

This is an uncharacterized protein from Caenorhabditis elegans.